Here is a 145-residue protein sequence, read N- to C-terminus: Aspartate 1-decarboxylase (145 aa).

The active-site Schiff-base intermediate with substrate; via pyruvic acid is the serine 25. Serine 25 is subject to Pyruvic acid (Ser). Residue threonine 57 coordinates substrate. Residue tyrosine 58 is the Proton donor of the active site. 73–75 (GAA) provides a ligand contact to substrate.

This sequence belongs to the PanD family. As to quaternary structure, heterooctamer of four alpha and four beta subunits. Requires pyruvate as cofactor. In terms of processing, is synthesized initially as an inactive proenzyme, which is activated by self-cleavage at a specific serine bond to produce a beta-subunit with a hydroxyl group at its C-terminus and an alpha-subunit with a pyruvoyl group at its N-terminus.

The protein resides in the cytoplasm. The enzyme catalyses L-aspartate + H(+) = beta-alanine + CO2. Its pathway is cofactor biosynthesis; (R)-pantothenate biosynthesis; beta-alanine from L-aspartate: step 1/1. Its function is as follows. Catalyzes the pyruvoyl-dependent decarboxylation of aspartate to produce beta-alanine. The chain is Aspartate 1-decarboxylase from Micrococcus luteus (strain ATCC 4698 / DSM 20030 / JCM 1464 / CCM 169 / CCUG 5858 / IAM 1056 / NBRC 3333 / NCIMB 9278 / NCTC 2665 / VKM Ac-2230) (Micrococcus lysodeikticus).